The primary structure comprises 341 residues: Ribosomal RNA small subunit methyltransferase C (341 aa).

It belongs to the methyltransferase superfamily. RsmC family. Monomer.

It localises to the cytoplasm. The catalysed reaction is guanosine(1207) in 16S rRNA + S-adenosyl-L-methionine = N(2)-methylguanosine(1207) in 16S rRNA + S-adenosyl-L-homocysteine + H(+). Its function is as follows. Specifically methylates the guanine in position 1207 of 16S rRNA in the 30S particle. The chain is Ribosomal RNA small subunit methyltransferase C from Shewanella halifaxensis (strain HAW-EB4).